The sequence spans 457 residues: tRNA modification GTPase MnmE (457 aa).

(6S)-5-formyl-5,6,7,8-tetrahydrofolate-binding residues include arginine 22, glutamate 85, and arginine 124. Positions 219 to 378 constitute a TrmE-type G domain; that stretch reads GATVVIAGKP…LKEKIYDLVL (160 aa). Asparagine 229 lines the K(+) pocket. Residues 229-234, 248-254, 273-276, and 333-336 each bind GTP; these read NTGKSS, TPVPGTT, DTAG, and NKAD. Residue serine 233 coordinates Mg(2+). K(+) contacts are provided by threonine 248, valine 250, and threonine 253. Residue threonine 254 coordinates Mg(2+). Lysine 457 is a binding site for (6S)-5-formyl-5,6,7,8-tetrahydrofolate.

It belongs to the TRAFAC class TrmE-Era-EngA-EngB-Septin-like GTPase superfamily. TrmE GTPase family. As to quaternary structure, homodimer. Heterotetramer of two MnmE and two MnmG subunits. The cofactor is K(+).

The protein resides in the cytoplasm. Exhibits a very high intrinsic GTPase hydrolysis rate. Involved in the addition of a carboxymethylaminomethyl (cmnm) group at the wobble position (U34) of certain tRNAs, forming tRNA-cmnm(5)s(2)U34. This is tRNA modification GTPase MnmE from Syntrophus aciditrophicus (strain SB).